The sequence spans 143 residues: Large ribosomal subunit protein uL13 (143 aa).

This sequence belongs to the universal ribosomal protein uL13 family. In terms of assembly, part of the 50S ribosomal subunit.

Its function is as follows. This protein is one of the early assembly proteins of the 50S ribosomal subunit, although it is not seen to bind rRNA by itself. It is important during the early stages of 50S assembly. The sequence is that of Large ribosomal subunit protein uL13 from Dichelobacter nodosus (strain VCS1703A).